The sequence spans 273 residues: MAIHLYKTSTPSTRNGAVDSQVKSNPRNNLIHGQHHCGKGRNARGIITAGHRGGGHKRLYRKIDFRRNEKDTSGRIVTIEYDPNRNAYICLIHYGDGEKRYILHPRGAIIGDTIVSGTEVPISMGNALPLTDMPLGTAIHNIEITLGKGGQLARAAGAVAKLIAKEGKSATLRLPSGEVRLISKNCSATVGQVGNVGVNQKSLGRAGSKCWLGKRPVVRGVVMNPVDHPHGGGEGRAPIGRKKPTTPWGYPALGRRSRKRNKYSDSLILRRRK.

Disordered stretches follow at residues 1-27 and 224-273; these read MAIH…SNPR and NPVD…RRRK.

This sequence belongs to the universal ribosomal protein uL2 family. In terms of assembly, part of the 50S ribosomal subunit.

Its subcellular location is the plastid. The protein localises to the chloroplast. This Liriodendron tulipifera (Tuliptree) protein is Large ribosomal subunit protein uL2cy (rpl2-B).